A 166-amino-acid polypeptide reads, in one-letter code: NADPH-dependent 7-cyano-7-deazaguanine reductase (166 aa).

Catalysis depends on C57, which acts as the Thioimide intermediate. The Proton donor role is filled by D64. Substrate-binding positions include 79-81 (VES) and 98-99 (HE).

The protein belongs to the GTP cyclohydrolase I family. QueF type 1 subfamily.

The protein resides in the cytoplasm. It catalyses the reaction 7-aminomethyl-7-carbaguanine + 2 NADP(+) = 7-cyano-7-deazaguanine + 2 NADPH + 3 H(+). It participates in tRNA modification; tRNA-queuosine biosynthesis. In terms of biological role, catalyzes the NADPH-dependent reduction of 7-cyano-7-deazaguanine (preQ0) to 7-aminomethyl-7-deazaguanine (preQ1). The sequence is that of NADPH-dependent 7-cyano-7-deazaguanine reductase from Staphylococcus epidermidis (strain ATCC 35984 / DSM 28319 / BCRC 17069 / CCUG 31568 / BM 3577 / RP62A).